A 394-amino-acid chain; its full sequence is MSKEKFERKKPHINVGTIGHVDHGKTTLTAAITTVLSKKYGGQARAFDQIDNAPEEKARGITINTSHVEYETPTRHYAHVDCPGHADYVKNMITGAAQMDGAILVVAATDGPMPQTREHILLARQVGVPYILVFLNKCDMVDDAELLELVEMEVRELLSQYDFPGDDTPIIQGSALKALEGDEAYQEKIVELANALDKYIPEPQRDIDKPFLLPIEDVFSISGRGTVVTGRVERGMIKTSDSVEIVGIKDTVTTTCTGIEMFRKLLDEGRAGENVGVLLRGIKREEIERGQVLAKPGSINPHTKFEAEVYILTKEEGGRHTPFFKGYRPQFYFRTTDVTGTIELPEGVEMVMPGDNIKMLVTLIHPIAMDDGLRFAIREGGRTVGAGVVAKVIK.

A tr-type G domain is found at 10-204; the sequence is KPHINVGTIG…ALDKYIPEPQ (195 aa). Residues 19–26 form a G1 region; the sequence is GHVDHGKT. A GTP-binding site is contributed by 19-26; the sequence is GHVDHGKT. Thr26 contacts Mg(2+). Residues 60–64 form a G2 region; the sequence is GITIN. A G3 region spans residues 81–84; it reads DCPG. GTP is bound by residues 81-85 and 136-139; these read DCPGH and NKCD. The interval 136 to 139 is G4; the sequence is NKCD. The interval 174 to 176 is G5; the sequence is SAL.

Belongs to the TRAFAC class translation factor GTPase superfamily. Classic translation factor GTPase family. EF-Tu/EF-1A subfamily. Monomer.

The protein resides in the cytoplasm. The catalysed reaction is GTP + H2O = GDP + phosphate + H(+). Functionally, GTP hydrolase that promotes the GTP-dependent binding of aminoacyl-tRNA to the A-site of ribosomes during protein biosynthesis. The protein is Elongation factor Tu of Hamiltonella defensa subsp. Acyrthosiphon pisum (strain 5AT).